A 107-amino-acid chain; its full sequence is Phosphoribosyl-ATP pyrophosphatase (107 aa).

The protein belongs to the PRA-PH family.

The protein localises to the cytoplasm. The enzyme catalyses 1-(5-phospho-beta-D-ribosyl)-ATP + H2O = 1-(5-phospho-beta-D-ribosyl)-5'-AMP + diphosphate + H(+). It participates in amino-acid biosynthesis; L-histidine biosynthesis; L-histidine from 5-phospho-alpha-D-ribose 1-diphosphate: step 2/9. The sequence is that of Phosphoribosyl-ATP pyrophosphatase (hisE) from Neisseria meningitidis serogroup A / serotype 4A (strain DSM 15465 / Z2491).